The following is a 125-amino-acid chain: Small ribosomal subunit protein eS8 (125 aa).

Positions 1 to 20 (MIWQGRSRRKPSGGFYRKAR) are disordered.

It belongs to the eukaryotic ribosomal protein eS8 family. In terms of assembly, part of the 30S ribosomal subunit.

The polypeptide is Small ribosomal subunit protein eS8 (rps8e) (Archaeoglobus fulgidus (strain ATCC 49558 / DSM 4304 / JCM 9628 / NBRC 100126 / VC-16)).